The chain runs to 108 residues: UPF0145 protein LJ_1287 (108 aa).

This sequence belongs to the UPF0145 family.

This Lactobacillus johnsonii (strain CNCM I-12250 / La1 / NCC 533) protein is UPF0145 protein LJ_1287.